Reading from the N-terminus, the 129-residue chain is Small ribosomal subunit protein uS13 (129 aa).

Residues 95-114 (NLPVRGQRTKTNARTRRGPR) are compositionally biased toward basic residues. Positions 95 to 129 (NLPVRGQRTKTNARTRRGPRKTVAGRGQKRGATKK) are disordered.

Belongs to the universal ribosomal protein uS13 family. Part of the 30S ribosomal subunit. Forms a loose heterodimer with protein S19. Forms two bridges to the 50S subunit in the 70S ribosome.

Located at the top of the head of the 30S subunit, it contacts several helices of the 16S rRNA. In the 70S ribosome it contacts the 23S rRNA (bridge B1a) and protein L5 of the 50S subunit (bridge B1b), connecting the 2 subunits; these bridges are implicated in subunit movement. Contacts the tRNAs in the A and P-sites. This chain is Small ribosomal subunit protein uS13, found in Dehalococcoides mccartyi (strain ATCC BAA-2100 / JCM 16839 / KCTC 5957 / BAV1).